The chain runs to 329 residues: Alpha-tubulin N-acetyltransferase 1 (329 aa).

The N-acetyltransferase domain maps to 5-185 (SQVALLPKLS…NNFVVFHRYF (181 aa)). Residues 119–132 (FFVD…GFGK) and 155–164 (SVKFLAFLQK) contribute to the acetyl-CoA site. Disordered stretches follow at residues 218–261 (PKYQ…GVGK) and 306–329 (GARR…TPEH). Residues 220–229 (YQSTTGPNNN) are compositionally biased toward polar residues. Pro residues predominate over residues 238–249 (TPPPPPLPPPLV). A compositionally biased stretch (polar residues) spans 313–329 (PTRSGVQYNIISGTPEH).

This sequence belongs to the acetyltransferase ATAT1 family.

It catalyses the reaction L-lysyl-[alpha-tubulin] + acetyl-CoA = N(6)-acetyl-L-lysyl-[alpha-tubulin] + CoA + H(+). Functionally, specifically acetylates 'Lys-40' in alpha-tubulin on the lumenal side of microtubules. Promotes microtubule destabilization and accelerates microtubule dynamics; this activity may be independent of acetylation activity. Acetylates alpha-tubulin with a slow enzymatic rate, due to a catalytic site that is not optimized for acetyl transfer. Enters the microtubule through each end and diffuses quickly throughout the lumen of microtubules. Acetylates only long/old microtubules because of its slow acetylation rate since it does not have time to act on dynamically unstable microtubules before the enzyme is released. This is Alpha-tubulin N-acetyltransferase 1 from Trypanosoma cruzi (strain CL Brener).